We begin with the raw amino-acid sequence, 291 residues long: UPF0276 protein VV1_0952 (291 aa).

It belongs to the UPF0276 family.

This Vibrio vulnificus (strain CMCP6) protein is UPF0276 protein VV1_0952.